The chain runs to 337 residues: Dihydroorotate dehydrogenase (quinone) (337 aa).

Residues Ala58–Lys62 and Thr82 contribute to the FMN site. Lys62 is a binding site for substrate. Residue Asn107–Phe111 coordinates substrate. Positions 137 and 170 each coordinate FMN. Position 170 (Asn170) interacts with substrate. Ser173 acts as the Nucleophile in catalysis. Asn175 contributes to the substrate binding site. FMN-binding residues include Lys215 and Thr243. Residue Asn244–Thr245 coordinates substrate. FMN contacts are provided by residues Gly266, Gly294, and Tyr315 to Ser316.

The protein belongs to the dihydroorotate dehydrogenase family. Type 2 subfamily. Monomer. FMN serves as cofactor.

It localises to the cell membrane. It carries out the reaction (S)-dihydroorotate + a quinone = orotate + a quinol. Its pathway is pyrimidine metabolism; UMP biosynthesis via de novo pathway; orotate from (S)-dihydroorotate (quinone route): step 1/1. Its function is as follows. Catalyzes the conversion of dihydroorotate to orotate with quinone as electron acceptor. The protein is Dihydroorotate dehydrogenase (quinone) of Dichelobacter nodosus (strain VCS1703A).